We begin with the raw amino-acid sequence, 231 residues long: 7-cyano-7-deazaguanine synthase (231 aa).

Residue 8–18 (FSGGQDSTTCL) participates in ATP binding. Zn(2+) contacts are provided by Cys188, Cys197, Cys200, and Cys203.

This sequence belongs to the QueC family. The cofactor is Zn(2+).

The catalysed reaction is 7-carboxy-7-deazaguanine + NH4(+) + ATP = 7-cyano-7-deazaguanine + ADP + phosphate + H2O + H(+). It functions in the pathway purine metabolism; 7-cyano-7-deazaguanine biosynthesis. In terms of biological role, catalyzes the ATP-dependent conversion of 7-carboxy-7-deazaguanine (CDG) to 7-cyano-7-deazaguanine (preQ(0)). The chain is 7-cyano-7-deazaguanine synthase from Salmonella arizonae (strain ATCC BAA-731 / CDC346-86 / RSK2980).